A 403-amino-acid polypeptide reads, in one-letter code: MSTSTSPAAMLLRRLRRLSWGSTAVQLFILTVVTFGLLAPLACHRLLHSYFYLRHWHLNQMSQEFLQQSLKEGEAALHYFEELPSANGSVPIVWQATPRPWLVITIITVDRQPGFHYVLQVVSQFHRLLQQCGPQCEGHQLFLCNVERSVSHFDAKLLSKYVPVANRYEGTEDDYGDDPSTNSFEKEKQDYVYCLESSLQTYNPDYVLMVEDDAVPEEQIFPVLEHLLRARFSEPHLRDALYLKLYHPERLQHYTNPEPMRILEWVGVGMLLGPLLTWIYMRFASRPGFSWPVMLFFSLYSMGLVELVGRHYFLELRRLSPSLYSVVPASQCCTPAMLFPAPAARRTLTYLSQVYCHKGFGKDMALYSLLRAKGERAYVVEPNLVKHIGLFSSLRYNFHPSLL.

At 1–22 (MSTSTSPAAMLLRRLRRLSWGS) the chain is on the cytoplasmic side. A helical membrane pass occupies residues 23 to 43 (TAVQLFILTVVTFGLLAPLAC). At 44–259 (HRLLHSYFYL…RLQHYTNPEP (216 aa)) the chain is on the lumenal side. Valine 109 contributes to the UDP-N-acetyl-alpha-D-galactosamine binding site. 2 disulfides stabilise this stretch: cysteine 132/cysteine 136 and cysteine 144/cysteine 194. The short motif at 211-213 (EDD) is the DXD motif element. The helical transmembrane segment at 260–280 (MRILEWVGVGMLLGPLLTWIY) threads the bilayer. Over 281 to 287 (MRFASRP) the chain is Cytoplasmic. The helical transmembrane segment at 288-308 (GFSWPVMLFFSLYSMGLVELV) threads the bilayer. The Lumenal portion of the chain corresponds to 309-403 (GRHYFLELRR…LRYNFHPSLL (95 aa)). Residues cysteine 332 and cysteine 333 are joined by a disulfide bond. 3 residues coordinate UDP-N-acetyl-alpha-D-galactosamine: threonine 334, proline 335, and lysine 362.

Belongs to the PGAP4 family. Post-translationally, glycosylated.

It is found in the golgi apparatus membrane. Golgi-resident glycosylphosphatidylinositol (GPI)-N-acetylgalactosamine transferase that catalyzes the N-acetyl-beta-D-galactosamine transfer from an UDP-N-acetyl-alpha-D-galactosamine to the 4-OH-position of first mannose of the glycosylphosphatidylinositol (GPI) of a GPI-anchored protein (GPI-AP). This modification occurs after the fatty acid remodeling step of the GPI-anchor maturation. The protein is GPI-N-acetylgalactosamine transferase PGAP4 of Pongo abelii (Sumatran orangutan).